The primary structure comprises 274 residues: 2,3,4,5-tetrahydropyridine-2,6-dicarboxylate N-succinyltransferase (274 aa).

R104 and D141 together coordinate substrate.

This sequence belongs to the transferase hexapeptide repeat family. Homotrimer.

The protein localises to the cytoplasm. The enzyme catalyses (S)-2,3,4,5-tetrahydrodipicolinate + succinyl-CoA + H2O = (S)-2-succinylamino-6-oxoheptanedioate + CoA. The protein operates within amino-acid biosynthesis; L-lysine biosynthesis via DAP pathway; LL-2,6-diaminopimelate from (S)-tetrahydrodipicolinate (succinylase route): step 1/3. This chain is 2,3,4,5-tetrahydropyridine-2,6-dicarboxylate N-succinyltransferase, found in Serratia proteamaculans (strain 568).